The sequence spans 149 residues: HTH-type transcriptional regulator NsrR (149 aa).

The HTH rrf2-type domain occupies 2–133 (QLTSYTDYSL…EQYTVKDLVL (132 aa)). The segment at residues 28-51 (VKQVADIYRISYNHLTKVTHELGK) is a DNA-binding region (H-T-H motif). Residues Cys92, Cys100, and Cys106 each contribute to the [2Fe-2S] cluster site.

Requires [2Fe-2S] cluster as cofactor.

Nitric oxide-responsive transcriptional regulator. The sequence is that of HTH-type transcriptional regulator NsrR (nsrR) from Shouchella clausii (strain KSM-K16) (Alkalihalobacillus clausii).